The primary structure comprises 332 residues: Glyceraldehyde-3-phosphate dehydrogenase 2 (332 aa).

Residues 11–12, D32, and R77 each bind NAD(+); that span reads RI. D-glyceraldehyde 3-phosphate-binding positions include 148–150, T179, 208–209, and R231; these read SCT and TG. Catalysis depends on C149, which acts as the Nucleophile. N313 is an NAD(+) binding site.

This sequence belongs to the glyceraldehyde-3-phosphate dehydrogenase family. As to quaternary structure, homotetramer.

Its subcellular location is the cytoplasm. It carries out the reaction D-glyceraldehyde 3-phosphate + phosphate + NAD(+) = (2R)-3-phospho-glyceroyl phosphate + NADH + H(+). It functions in the pathway carbohydrate degradation; glycolysis; pyruvate from D-glyceraldehyde 3-phosphate: step 1/5. In Drosophila pseudoobscura pseudoobscura (Fruit fly), this protein is Glyceraldehyde-3-phosphate dehydrogenase 2 (Gapdh2).